Reading from the N-terminus, the 165-residue chain is Small ribosomal subunit protein uS17c (165 aa).

A chloroplast-targeting transit peptide spans 1-57 (MSLSFSLLKPPLSSSNPNPFLHGTTTKLSLLPSFSALSLSSSPPSSSTTYTFPVIKA). A disordered region spans residues 128–165 (AVAPEGRQSSATRPKPIQAASDELGIPLESQVEGDKTV).

In terms of assembly, component of the chloroplast small ribosomal subunit (SSU). Mature 70S chloroplast ribosomes of higher plants consist of a small (30S) and a large (50S) subunit. The 30S small subunit contains 1 molecule of ribosomal RNA (16S rRNA) and 24 different proteins. The 50S large subunit contains 3 rRNA molecules (23S, 5S and 4.5S rRNA) and 33 different proteins.

The protein resides in the plastid. The protein localises to the chloroplast. In terms of biological role, component of the chloroplast ribosome (chloro-ribosome), a dedicated translation machinery responsible for the synthesis of chloroplast genome-encoded proteins, including proteins of the transcription and translation machinery and components of the photosynthetic apparatus. The chain is Small ribosomal subunit protein uS17c (RPS17) from Spinacia oleracea (Spinach).